Here is a 107-residue protein sequence, read N- to C-terminus: Inner membrane protein YgbE (107 aa).

Residues methionine 1 to glutamate 20 are Cytoplasmic-facing. A helical membrane pass occupies residues threonine 21–methionine 43. Topologically, residues leucine 44–phenylalanine 52 are periplasmic. The helical transmembrane segment at phenylalanine 53 to leucine 75 threads the bilayer. The Cytoplasmic portion of the chain corresponds to histidine 76–serine 86. Residues isoleucine 87–leucine 106 traverse the membrane as a helical segment. Position 107 (glycine 107) is a topological domain, periplasmic.

It localises to the cell inner membrane. This Escherichia coli (strain K12) protein is Inner membrane protein YgbE (ygbE).